A 705-amino-acid polypeptide reads, in one-letter code: Ribosomal RNA large subunit methyltransferase K/L (705 aa).

In terms of domain architecture, THUMP spans 43-154 (LLYQSLLWSR…RDTASVALDL (112 aa)).

It belongs to the methyltransferase superfamily. RlmKL family.

The protein resides in the cytoplasm. The enzyme catalyses guanosine(2445) in 23S rRNA + S-adenosyl-L-methionine = N(2)-methylguanosine(2445) in 23S rRNA + S-adenosyl-L-homocysteine + H(+). It catalyses the reaction guanosine(2069) in 23S rRNA + S-adenosyl-L-methionine = N(2)-methylguanosine(2069) in 23S rRNA + S-adenosyl-L-homocysteine + H(+). In terms of biological role, specifically methylates the guanine in position 2445 (m2G2445) and the guanine in position 2069 (m7G2069) of 23S rRNA. This chain is Ribosomal RNA large subunit methyltransferase K/L, found in Pectobacterium atrosepticum (strain SCRI 1043 / ATCC BAA-672) (Erwinia carotovora subsp. atroseptica).